We begin with the raw amino-acid sequence, 695 residues long: Frizzled and smoothened-like protein O (695 aa).

The N-terminal stretch at 1-23 is a signal peptide; it reads MKKLNYLLIVSFIFILNLLISKS. Over 24–233 the chain is Extracellular; it reads QVLIDVTAKC…KEYKTKFYSE (210 aa). One can recognise an FZ domain in the interval 28–173; sequence DVTAKCELID…ANEEIQCSGP (146 aa). 5 disulfides stabilise this stretch: C33–C96, C42–C89, C80–C125, C114–C170, and C118–C138. N-linked (GlcNAc...) asparagine glycosylation is present at N47. N-linked (GlcNAc...) asparagine glycans are attached at residues N137 and N178. The chain crosses the membrane as a helical span at residues 234 to 254; the sequence is AILFSFSTACSFYLIFTFGVF. Residues 255-262 lie on the Cytoplasmic side of the membrane; it reads PNKYTNRN. Residues 263-283 form a helical membrane-spanning segment; it reads WIIVYLGITAICLAISYAVQE. Residues 284 to 307 lie on the Extracellular side of the membrane; that stretch reads ARYGGGDWRCTSDPGRYKSSEDGT. Residues 308–328 traverse the membrane as a helical segment; that stretch reads CILGGFFFQIGGLGTILFLSL. Residues 329–343 lie on the Cytoplasmic side of the membrane; sequence YSFDMFLTMNMMTNK. A helical membrane pass occupies residues 344-364; the sequence is YFIQTSVGMWALIIFYALLPI. Residues 365–387 lie on the Extracellular side of the membrane; it reads KHYESSIASAGCWLSNEDNMFWQ. Residues 388-408 form a helical membrane-spanning segment; it reads YFCFYVPSYVATFFLGVFIIT. At 409–435 the chain is on the cytoplasmic side; it reads SIYKVFKMTVMFKSIKDKRILLLNIRS. A helical membrane pass occupies residues 436–456; sequence IIFLIAIMFCVSFSTMYPLYV. The Extracellular portion of the chain corresponds to 457–500; that stretch reads TYNGDDFSKSVEVYVTCLYANIPNGNEVCPQIVFPQFSLRYMNA. The chain crosses the membrane as a helical span at residues 501–521; that stretch reads ITMAIIGIVGLIGLGIDPHIL. The Cytoplasmic portion of the chain corresponds to 522–695; sequence QIYRESIRFK…NIERINSDNV (174 aa). Over residues 545–556 the composition is skewed to polar residues; the sequence is SPQPLKQGSTTD. The disordered stretch occupies residues 545 to 695; that stretch reads SPQPLKQGST…NIERINSDNV (151 aa). Residues 593-608 are compositionally biased toward low complexity; it reads NLSASSESSNNLLNQS. A compositionally biased stretch (polar residues) spans 609–625; sequence TPGNLNINESISSIDTS. Low complexity predominate over residues 626-686; that stretch reads NNNNNNNNNN…NNNNNNNNNN (61 aa). Residues 653–691 adopt a coiled-coil conformation; the sequence is NNNNNNNNNNNNNNNNNNNNYSNNNNNNNNNNNNIERIN.

Belongs to the G-protein coupled receptor Fz/Smo family.

The protein localises to the membrane. The protein is Frizzled and smoothened-like protein O (fslO) of Dictyostelium discoideum (Social amoeba).